The following is a 266-amino-acid chain: Thymidylate synthase (266 aa).

R24 lines the dUMP pocket. H54 is a binding site for (6R)-5,10-methylene-5,6,7,8-tetrahydrofolate. Position 129–130 (R129–R130) interacts with dUMP. The active-site Nucleophile is C149. DUMP is bound by residues R169–D172, N180, and H210–Y212. D172 is a (6R)-5,10-methylene-5,6,7,8-tetrahydrofolate binding site. A265 contributes to the (6R)-5,10-methylene-5,6,7,8-tetrahydrofolate binding site.

It belongs to the thymidylate synthase family. Bacterial-type ThyA subfamily. Homodimer.

Its subcellular location is the cytoplasm. It carries out the reaction dUMP + (6R)-5,10-methylene-5,6,7,8-tetrahydrofolate = 7,8-dihydrofolate + dTMP. It participates in pyrimidine metabolism; dTTP biosynthesis. Functionally, catalyzes the reductive methylation of 2'-deoxyuridine-5'-monophosphate (dUMP) to 2'-deoxythymidine-5'-monophosphate (dTMP) while utilizing 5,10-methylenetetrahydrofolate (mTHF) as the methyl donor and reductant in the reaction, yielding dihydrofolate (DHF) as a by-product. This enzymatic reaction provides an intracellular de novo source of dTMP, an essential precursor for DNA biosynthesis. This Mycobacterium leprae (strain TN) protein is Thymidylate synthase.